We begin with the raw amino-acid sequence, 117 residues long: Large ribosomal subunit protein bL20 (117 aa).

It belongs to the bacterial ribosomal protein bL20 family.

In terms of biological role, binds directly to 23S ribosomal RNA and is necessary for the in vitro assembly process of the 50S ribosomal subunit. It is not involved in the protein synthesizing functions of that subunit. The chain is Large ribosomal subunit protein bL20 from Finegoldia magna (strain ATCC 29328 / DSM 20472 / WAL 2508) (Peptostreptococcus magnus).